Here is a 222-residue protein sequence, read N- to C-terminus: Putative hemin import ATP-binding protein HrtA (222 aa).

One can recognise an ABC transporter domain in the interval 3-222 (LVVKDISKTF…QLYDGKIKNS (220 aa)). Position 39 to 46 (39 to 46 (GASGSGKT)) interacts with ATP.

It belongs to the ABC transporter superfamily. HrtA family. As to quaternary structure, the complex is composed of two ATP-binding proteins (HrtA), two transmembrane proteins (HrtB) and a solute-binding protein.

It localises to the cell membrane. In terms of biological role, part of the ABC transporter complex hrt involved in hemin import. Responsible for energy coupling to the transport system. The protein is Putative hemin import ATP-binding protein HrtA (hrtA) of Staphylococcus epidermidis (strain ATCC 12228 / FDA PCI 1200).